The primary structure comprises 373 residues: Enoyl-[acyl-carrier-protein] reductase, mitochondrial (373 aa).

The N-terminal 53 residues, M1–D53, are a transit peptide targeting the mitochondrion. An N6-acetyllysine; alternate modification is found at K61. K61 carries the post-translational modification N6-succinyllysine; alternate. Y94 (proton donor) is an active-site residue. Residues N167, N193–V196, and R216–R218 contribute to the NADP(+) site. 2 positions are modified to N6-acetyllysine; alternate: K252 and K267. An N6-succinyllysine; alternate mark is found at K252 and K267. NADP(+)-binding positions include Y285–M288 and F310–L312. At K316 the chain carries N6-succinyllysine. K368 contacts NADP(+).

Belongs to the zinc-containing alcohol dehydrogenase family. Quinone oxidoreductase subfamily. Homodimer. As to expression, expressed in Purkinje cells (at protein level).

It is found in the mitochondrion. It catalyses the reaction a 2,3-saturated acyl-[ACP] + NADP(+) = a (2E)-enoyl-[ACP] + NADPH + H(+). It carries out the reaction (2E)-butenoyl-[ACP] + NADPH + H(+) = butanoyl-[ACP] + NADP(+). The catalysed reaction is (2E)-hexenoyl-[ACP] + NADPH + H(+) = hexanoyl-[ACP] + NADP(+). The enzyme catalyses (2E)-octenoyl-[ACP] + NADPH + H(+) = octanoyl-[ACP] + NADP(+). It catalyses the reaction (2E)-decenoyl-[ACP] + NADPH + H(+) = decanoyl-[ACP] + NADP(+). It carries out the reaction (2E)-dodecenoyl-[ACP] + NADPH + H(+) = dodecanoyl-[ACP] + NADP(+). The catalysed reaction is (2E)-tetradecenoyl-[ACP] + NADPH + H(+) = tetradecanoyl-[ACP] + NADP(+). The enzyme catalyses (2E)-hexadecenoyl-[ACP] + NADPH + H(+) = hexadecanoyl-[ACP] + NADP(+). Its function is as follows. Catalyzes the NADPH-dependent reduction of trans-2-enoyl thioesters in mitochondrial fatty acid synthesis (fatty acid synthesis type II). Fatty acid chain elongation in mitochondria uses acyl carrier protein (ACP) as an acyl group carrier, but the enzyme accepts both ACP and CoA thioesters as substrates in vitro. Displays a preference for medium-chain over short- and long-chain substrates. May provide the octanoyl chain used for lipoic acid biosynthesis, regulating protein lipoylation and mitochondrial respiratory activity particularly in Purkinje cells. Involved in iron homeostasis; affecting Fe-S cluster assembly and ceramide metabolism. Required for proper morphology and bioenergetic functions of mitochondria. Required for maintenance of neurons. This chain is Enoyl-[acyl-carrier-protein] reductase, mitochondrial (Mecr), found in Mus musculus (Mouse).